We begin with the raw amino-acid sequence, 74 residues long: Omega-conotoxin-like protein 1 (74 aa).

The signal sequence occupies residues 1-20 (MSKFILLVCILLLTTNIVSA). Cystine bridges form between Cys-24-Cys-38, Cys-31-Cys-43, and Cys-37-Cys-50.

As to expression, highly expressed in brain. Is also found in hemolymph.

Its function is as follows. The impact of this protein on the neuronal activity of the honeybee brain is not known. It does not affect apparent movement or hatching of blowfly larvae. However, when injected into fish, it induces a strong reversible paralytic effect. In addition, the presence of this small peptide in the hemolymph of adult drones together with its induction after bacterial infection suggests that this peptide exhibits antibacterial activity. This peptide may act by inhibiting ion channels. The sequence is that of Omega-conotoxin-like protein 1 from Apis mellifera (Honeybee).